Consider the following 195-residue polypeptide: MGYIPYVIENTERGERSYDIYSRLLKDRIVLLSGEINDSVASSIVAQLLFLEAEDPEKDIGLYINSPGGVITSGLSIYDTMNFIRPDVSTICIGQAASMGAFLLSCGAKGKRFSLPHSRIMIHQPLGGAQGQASDIEIISNEILRLKGLMNSILAQNSGQSLEQIAKDTDRDFYMSAKEAKEYGLIDKVLQKNVK.

The Nucleophile role is filled by serine 98. Histidine 123 is an active-site residue.

This sequence belongs to the peptidase S14 family. In terms of assembly, fourteen ClpP subunits assemble into 2 heptameric rings which stack back to back to give a disk-like structure with a central cavity, resembling the structure of eukaryotic proteasomes.

The protein localises to the cytoplasm. The catalysed reaction is Hydrolysis of proteins to small peptides in the presence of ATP and magnesium. alpha-casein is the usual test substrate. In the absence of ATP, only oligopeptides shorter than five residues are hydrolyzed (such as succinyl-Leu-Tyr-|-NHMec, and Leu-Tyr-Leu-|-Tyr-Trp, in which cleavage of the -Tyr-|-Leu- and -Tyr-|-Trp bonds also occurs).. Its function is as follows. Cleaves peptides in various proteins in a process that requires ATP hydrolysis. Has a chymotrypsin-like activity. Plays a major role in the degradation of misfolded proteins. This is ATP-dependent Clp protease proteolytic subunit from Helicobacter pylori (strain J99 / ATCC 700824) (Campylobacter pylori J99).